The chain runs to 1264 residues: ATP-dependent helicase/nuclease subunit A (1264 aa).

Residues 12–482 (EQFTDSQWQA…IILAENFRSR (471 aa)) form the UvrD-like helicase ATP-binding domain. 33–40 (ASAGSGKT) is a binding site for ATP. The region spanning 520 to 808 (SEAADYSTEL…RVMTIHASKG (289 aa)) is the UvrD-like helicase C-terminal domain.

It belongs to the helicase family. AddA subfamily. In terms of assembly, heterodimer of AddA and AddB/RexB. Mg(2+) serves as cofactor.

The enzyme catalyses Couples ATP hydrolysis with the unwinding of duplex DNA by translocating in the 3'-5' direction.. It catalyses the reaction ATP + H2O = ADP + phosphate + H(+). Its function is as follows. The heterodimer acts as both an ATP-dependent DNA helicase and an ATP-dependent, dual-direction single-stranded exonuclease. Recognizes the chi site generating a DNA molecule suitable for the initiation of homologous recombination. The AddA nuclease domain is required for chi fragment generation; this subunit has the helicase and 3' -&gt; 5' nuclease activities. This chain is ATP-dependent helicase/nuclease subunit A, found in Enterococcus faecalis (strain ATCC 700802 / V583).